The primary structure comprises 366 residues: Growth hormone secretagogue receptor type 1 (366 aa).

The Extracellular portion of the chain corresponds to 1-40; it reads MWNATPSEEPGFNLTLADLDWDASPGNDSLGDELLQLFPA. Asparagine 13 and asparagine 27 each carry an N-linked (GlcNAc...) asparagine glycan. The chain crosses the membrane as a helical span at residues 41-66; that stretch reads PLLAGVTATCVALFVVGIAGNLLTML. Residues 67 to 72 are Cytoplasmic-facing; sequence VVSRFR. Residues 73-96 traverse the membrane as a helical segment; it reads ELRTTTNLYLSSMAFSDLLIFLCM. The Extracellular portion of the chain corresponds to 97–117; sequence PLDLVRLWQYRPWNFGDLLCK. A disulfide bond links cysteine 116 and cysteine 198. Residues 118 to 139 form a helical membrane-spanning segment; the sequence is LFQFVSESCTYATVLTITALSV. Over 140–162 the chain is Cytoplasmic; that stretch reads ERYFAICFPLRAKVVVTKGRVKL. A helical transmembrane segment spans residues 163–183; the sequence is VIFVIWAVAFCSAGPIFVLVG. The Extracellular segment spans residues 184–211; that stretch reads VEHENGTDPWDTNECRPTEFAVRSGLLT. The helical transmembrane segment at 212-235 threads the bilayer; that stretch reads VMVWVSSIFFFLPVFCLTVLYSLI. Topologically, residues 236 to 263 are cytoplasmic; the sequence is GRKLWRRRRGDAVVGASLRDQNHKQTVK. Residues 264 to 285 traverse the membrane as a helical segment; the sequence is MLAVVVFAFILCWLPFHVGRYL. Topologically, residues 286 to 302 are extracellular; the sequence is FSKSFEPGSLEIAQISQ. A helical membrane pass occupies residues 303 to 326; sequence YCNLVSFVLFYLSAAINPILYNIM. Residues 327 to 366 are Cytoplasmic-facing; it reads SKKYRVAVFRLLGFEPFSQRKLSTLKDESSRAWTESSINT.

This sequence belongs to the G-protein coupled receptor 1 family. In terms of tissue distribution, pituitary and hypothalamus.

Its subcellular location is the cell membrane. Its function is as follows. Receptor for ghrelin, coupled to G-alpha-11 proteins. Stimulates growth hormone secretion. Also binds other growth hormone releasing peptides (GHRP) (e.g. Met-enkephalin and GHRP-6) as well as non-peptide, low molecular weight secretagogues (e.g. L-692,429, MK-0677, adenosine). The polypeptide is Growth hormone secretagogue receptor type 1 (GHSR) (Homo sapiens (Human)).